The sequence spans 289 residues: Oxaloacetate decarboxylase 1 (289 aa).

S50 provides a ligand contact to substrate. Position 88 (D88) interacts with Mg(2+). Substrate is bound by residues R159 and H235.

Belongs to the isocitrate lyase/PEP mutase superfamily. Oxaloacetate decarboxylase family. Homotetramer; dimer of dimers. The cofactor is Mg(2+).

It carries out the reaction oxaloacetate + H(+) = pyruvate + CO2. Its function is as follows. Catalyzes the decarboxylation of oxaloacetate into pyruvate. Seems to play a role in maintaining cellular concentrations of bicarbonate and pyruvate. This is Oxaloacetate decarboxylase 1 from Pseudomonas fluorescens (strain Pf0-1).